A 304-amino-acid chain; its full sequence is Putative integrase/recombinase HI_1414 (304 aa).

The Core-binding (CB) domain maps to 30–109 (TLFSDVIKRY…TIGHIFKIAL (80 aa)). One can recognise a Tyr recombinase domain in the interval 131–304 (PRTQRVTEEN…DMAEVAELLD (174 aa)). Catalysis depends on residues arginine 174, lysine 199, histidine 256, arginine 259, and histidine 281. Tyrosine 291 functions as the O-(3'-phospho-DNA)-tyrosine intermediate in the catalytic mechanism.

This sequence belongs to the 'phage' integrase family.

This Haemophilus influenzae (strain ATCC 51907 / DSM 11121 / KW20 / Rd) protein is Putative integrase/recombinase HI_1414.